Consider the following 305-residue polypeptide: tRNA dimethylallyltransferase (305 aa).

Position 11–18 (glycine 11–threonine 18) interacts with ATP. Substrate is bound at residue threonine 13–threonine 18. An interaction with substrate tRNA region spans residues aspartate 36–glutamine 39.

The protein belongs to the IPP transferase family. In terms of assembly, monomer. Mg(2+) is required as a cofactor.

The enzyme catalyses adenosine(37) in tRNA + dimethylallyl diphosphate = N(6)-dimethylallyladenosine(37) in tRNA + diphosphate. Functionally, catalyzes the transfer of a dimethylallyl group onto the adenine at position 37 in tRNAs that read codons beginning with uridine, leading to the formation of N6-(dimethylallyl)adenosine (i(6)A). The polypeptide is tRNA dimethylallyltransferase (Listeria monocytogenes serotype 4a (strain HCC23)).